The following is a 291-amino-acid chain: Acetyl-coenzyme A carboxylase carboxyl transferase subunit beta (291 aa).

Residues 1 to 23 (MSWLSKLMPSGIRTDNTPSKKRS) form a disordered region. The region spanning 28-291 (LWEKCSNCGS…LGRQPAPEVA (264 aa)) is the CoA carboxyltransferase N-terminal domain. Residues Cys-32, Cys-35, Cys-51, and Cys-54 each coordinate Zn(2+). Residues 32–54 (CSNCGSALYRPELEENLEVCPKC) form a C4-type zinc finger.

This sequence belongs to the AccD/PCCB family. Acetyl-CoA carboxylase is a heterohexamer composed of biotin carboxyl carrier protein (AccB), biotin carboxylase (AccC) and two subunits each of ACCase subunit alpha (AccA) and ACCase subunit beta (AccD). The cofactor is Zn(2+).

Its subcellular location is the cytoplasm. It catalyses the reaction N(6)-carboxybiotinyl-L-lysyl-[protein] + acetyl-CoA = N(6)-biotinyl-L-lysyl-[protein] + malonyl-CoA. The protein operates within lipid metabolism; malonyl-CoA biosynthesis; malonyl-CoA from acetyl-CoA: step 1/1. Its function is as follows. Component of the acetyl coenzyme A carboxylase (ACC) complex. Biotin carboxylase (BC) catalyzes the carboxylation of biotin on its carrier protein (BCCP) and then the CO(2) group is transferred by the transcarboxylase to acetyl-CoA to form malonyl-CoA. The chain is Acetyl-coenzyme A carboxylase carboxyl transferase subunit beta from Stenotrophomonas maltophilia (strain R551-3).